The sequence spans 355 residues: Heat-inducible transcription repressor HrcA (355 aa).

Belongs to the HrcA family.

Its function is as follows. Negative regulator of class I heat shock genes (grpE-dnaK-dnaJ and groELS operons). Prevents heat-shock induction of these operons. In Prosthecochloris aestuarii (strain DSM 271 / SK 413), this protein is Heat-inducible transcription repressor HrcA.